The chain runs to 447 residues: Phosphoglucosamine mutase (447 aa).

S103 functions as the Phosphoserine intermediate in the catalytic mechanism. Mg(2+) contacts are provided by S103, D242, D244, and D246. At S103 the chain carries Phosphoserine.

This sequence belongs to the phosphohexose mutase family. It depends on Mg(2+) as a cofactor. Activated by phosphorylation.

The enzyme catalyses alpha-D-glucosamine 1-phosphate = D-glucosamine 6-phosphate. Its function is as follows. Catalyzes the conversion of glucosamine-6-phosphate to glucosamine-1-phosphate. This is Phosphoglucosamine mutase from Marinobacter nauticus (strain ATCC 700491 / DSM 11845 / VT8) (Marinobacter aquaeolei).